A 162-amino-acid chain; its full sequence is Cyclic pyranopterin monophosphate synthase (162 aa).

Substrate contacts are provided by residues 75–77 (LCH) and 113–114 (ME). The active site involves Asp-128.

This sequence belongs to the MoaC family. As to quaternary structure, homohexamer; trimer of dimers.

It catalyses the reaction (8S)-3',8-cyclo-7,8-dihydroguanosine 5'-triphosphate = cyclic pyranopterin phosphate + diphosphate. It functions in the pathway cofactor biosynthesis; molybdopterin biosynthesis. Functionally, catalyzes the conversion of (8S)-3',8-cyclo-7,8-dihydroguanosine 5'-triphosphate to cyclic pyranopterin monophosphate (cPMP). The chain is Cyclic pyranopterin monophosphate synthase from Burkholderia cenocepacia (strain ATCC BAA-245 / DSM 16553 / LMG 16656 / NCTC 13227 / J2315 / CF5610) (Burkholderia cepacia (strain J2315)).